Reading from the N-terminus, the 914-residue chain is Isoleucine--tRNA ligase (914 aa).

The 'HIGH' region signature appears at 64–74 (PYANGNFHLGH). Glu-557 contributes to the L-isoleucyl-5'-AMP binding site. The 'KMSKS' region signature appears at 598–602 (PMSKS). Lys-601 is an ATP binding site. The Zn(2+) site is built by Cys-889, Cys-892, Cys-906, and Cys-909.

This sequence belongs to the class-I aminoacyl-tRNA synthetase family. IleS type 1 subfamily. In terms of assembly, monomer. The cofactor is Zn(2+).

The protein localises to the cytoplasm. The enzyme catalyses tRNA(Ile) + L-isoleucine + ATP = L-isoleucyl-tRNA(Ile) + AMP + diphosphate. Functionally, catalyzes the attachment of isoleucine to tRNA(Ile). As IleRS can inadvertently accommodate and process structurally similar amino acids such as valine, to avoid such errors it has two additional distinct tRNA(Ile)-dependent editing activities. One activity is designated as 'pretransfer' editing and involves the hydrolysis of activated Val-AMP. The other activity is designated 'posttransfer' editing and involves deacylation of mischarged Val-tRNA(Ile). This is Isoleucine--tRNA ligase from Leptospira interrogans serogroup Icterohaemorrhagiae serovar Lai (strain 56601).